The chain runs to 325 residues: UPF0285 protein MM_0679 (325 aa).

It belongs to the UPF0285 family.

The sequence is that of UPF0285 protein MM_0679 from Methanosarcina mazei (strain ATCC BAA-159 / DSM 3647 / Goe1 / Go1 / JCM 11833 / OCM 88) (Methanosarcina frisia).